The chain runs to 1261 residues: Structural maintenance of chromosomes protein 3 (1261 aa).

Coiled coils occupy residues 188–332 (EKIQ…HSLQ) and 406–450 (LIAD…YEMD). An SMC hinge domain is found at 534-645 (NGYYGTVIEL…IIVRTLDQAA (112 aa)). Coiled-coil stretches lie at residues 677–826 (KRSK…MDLM), 857–930 (NERR…DKIT), and 1023–1085 (RELE…ENRK). The DA-box signature appears at 1159–1193 (LSGGQKSLVALAIIFSIQKCDPAPFYLFDEIDAAL).

Belongs to the SMC family. SMC3 subfamily. Component of the cohesin complex, composed of the smc-1 and smc-3 heterodimer attached via their SMC hinge domain, scc-1 which links them, and scc-3. Interacts with scc-1, smc-1 and tim-1.

The protein resides in the nucleus. It localises to the chromosome. In terms of biological role, involved in chromosome cohesion during cell cycle and in DNA repair. Involved in the repair of double strand breaks during mitosis and meiosis. Required for chromosome segregation during mitosis. Central component of cohesin complex. The cohesin complex is required for the cohesion of sister chromatids after DNA replication. The cohesin complex apparently forms a large proteinaceous ring within which sister chromatids can be trapped. At anaphase, the complex is cleaved and dissociates from chromatin, allowing sister chromatids to segregate. Required for the localization of lab-1 to meiotic and mitotic chromosomes. This Caenorhabditis elegans protein is Structural maintenance of chromosomes protein 3.